The primary structure comprises 89 residues: Small ribosomal subunit protein uS15 (89 aa).

This sequence belongs to the universal ribosomal protein uS15 family. In terms of assembly, part of the 30S ribosomal subunit. Forms a bridge to the 50S subunit in the 70S ribosome, contacting the 23S rRNA.

Its function is as follows. One of the primary rRNA binding proteins, it binds directly to 16S rRNA where it helps nucleate assembly of the platform of the 30S subunit by binding and bridging several RNA helices of the 16S rRNA. In terms of biological role, forms an intersubunit bridge (bridge B4) with the 23S rRNA of the 50S subunit in the ribosome. The protein is Small ribosomal subunit protein uS15 of Cupriavidus necator (strain ATCC 17699 / DSM 428 / KCTC 22496 / NCIMB 10442 / H16 / Stanier 337) (Ralstonia eutropha).